The sequence spans 201 residues: Inner membrane protein YnbA (201 aa).

Residues 1–43 (MTLYQIKPLFQSLLRPTMFWLYKHHVTANHITLAALALSLLTG) lie on the Periplasmic side of the membrane. A helical transmembrane segment spans residues 44 to 64 (LLLMLAAQPILFLLLPIVLFI). Residues 65–84 (RMALNALDGMLARECNQQTR) are Cytoplasmic-facing. A helical membrane pass occupies residues 85-107 (LGAILNETGDVISDIALYLPFLF). Topologically, residues 108-116 (LPESNASLV) are periplasmic. The chain crosses the membrane as a helical span at residues 117 to 139 (ILMLFCTILTEFCGLLAQTINGV). The Cytoplasmic segment spans residues 140 to 151 (RSYAGPFGKSDR). Residues 152–172 (ALIFGLWGLAVAIYPQWMQWN) form a helical membrane-spanning segment. The Periplasmic segment spans residues 173–175 (NLL). Residues 176-196 (WSIASILLLWTAINRCRSVLL) form a helical membrane-spanning segment. Over 197-201 (MSAEI) the chain is Cytoplasmic.

It localises to the cell inner membrane. This chain is Inner membrane protein YnbA (ynbA), found in Escherichia coli (strain K12).